We begin with the raw amino-acid sequence, 311 residues long: Methionyl-tRNA formyltransferase (311 aa).

A (6S)-5,6,7,8-tetrahydrofolate-binding site is contributed by 110–113 (SLLP).

It belongs to the Fmt family.

The enzyme catalyses L-methionyl-tRNA(fMet) + (6R)-10-formyltetrahydrofolate = N-formyl-L-methionyl-tRNA(fMet) + (6S)-5,6,7,8-tetrahydrofolate + H(+). Attaches a formyl group to the free amino group of methionyl-tRNA(fMet). The formyl group appears to play a dual role in the initiator identity of N-formylmethionyl-tRNA by promoting its recognition by IF2 and preventing the misappropriation of this tRNA by the elongation apparatus. This chain is Methionyl-tRNA formyltransferase, found in Streptococcus pneumoniae serotype 2 (strain D39 / NCTC 7466).